Reading from the N-terminus, the 148-residue chain is Insoluble matrix shell protein 1 (148 aa).

Residues 105 to 128 are disordered; that stretch reads KSGRTEARNTDDSGDPIIDPRTAD.

In terms of tissue distribution, component of the acid-insoluble organic matrix of the calcified shell.

It localises to the secreted. The polypeptide is Insoluble matrix shell protein 1 (Ruditapes philippinarum (Japanese carpet shell)).